Consider the following 368-residue polypeptide: Protein RecA (368 aa).

Residue 80-87 (GPESSGKT) participates in ATP binding. Over residues 344 to 353 (NPTFTATPDS) the composition is skewed to polar residues. The segment at 344–368 (NPTFTATPDSENADNADDEFSEEEL) is disordered. Residues 354 to 368 (ENADNADDEFSEEEL) are compositionally biased toward acidic residues.

The protein belongs to the RecA family.

The protein resides in the cytoplasm. Functionally, can catalyze the hydrolysis of ATP in the presence of single-stranded DNA, the ATP-dependent uptake of single-stranded DNA by duplex DNA, and the ATP-dependent hybridization of homologous single-stranded DNAs. It interacts with LexA causing its activation and leading to its autocatalytic cleavage. The chain is Protein RecA from Mannheimia haemolytica (Pasteurella haemolytica).